A 241-amino-acid chain; its full sequence is Ribose-5-phosphate isomerase A (241 aa).

Substrate contacts are provided by residues 29–32 (TGTT), 84–87 (DGAD), and 97–100 (KGGG). Glu106 acts as the Proton acceptor in catalysis. Residue Lys124 participates in substrate binding.

Belongs to the ribose 5-phosphate isomerase family. As to quaternary structure, homodimer.

The catalysed reaction is aldehydo-D-ribose 5-phosphate = D-ribulose 5-phosphate. It functions in the pathway carbohydrate degradation; pentose phosphate pathway; D-ribose 5-phosphate from D-ribulose 5-phosphate (non-oxidative stage): step 1/1. In terms of biological role, catalyzes the reversible conversion of ribose-5-phosphate to ribulose 5-phosphate. The protein is Ribose-5-phosphate isomerase A of Thermoplasma acidophilum (strain ATCC 25905 / DSM 1728 / JCM 9062 / NBRC 15155 / AMRC-C165).